The following is a 1170-amino-acid chain: DNA excision repair protein ERCC-5 (1170 aa).

The N-domain stretch occupies residues 1 to 78 (MGVQGLWKLL…RIRPIFVFDG (78 aa)). An N6-acetyllysine modification is found at K8. Residue D30 coordinates Mg(2+). The interval 31 to 67 (ISIWLNQALKGVRDSHGNVIENAHLLTLFHRLCKLLF) is DNA-binding; may bind to the undamaged single-strand DNA of the DNA repair bubble. D77 provides a ligand contact to Mg(2+). A spacer region region spans residues 79 to 784 (DAPLLKKQTL…LRLFGVPYIQ (706 aa)). Disordered regions lie at residues 304–479 (DSES…RCDT), 520–587 (HVSG…PKAC), and 600–701 (LENA…ECLL). Residues 306–323 (ESLPSSSNVHSVSSNLKS) show a composition bias toward low complexity. 2 stretches are compositionally biased toward basic and acidic residues: residues 324-336 (SPHE…REPE) and 363-373 (SREGRQSKERN). S384 carries the phosphoserine modification. Residues 455 to 474 (TSGSSANGQTDSAHSFTTAS) are compositionally biased toward polar residues. A compositionally biased stretch (basic and acidic residues) spans 539–551 (THSDQGIDIHPED). Residues 659 to 676 (SVVSNSELQTESSEASTH) show a composition bias toward polar residues. Over residues 677-698 (LSEKDAEEPRETLEEGTSRDTE) the composition is skewed to basic and acidic residues. Residues S704 and S705 each carry the phosphoserine modification. An I-domain region spans residues 785–880 (APMEAEAQCA…VTAMEILNEF (96 aa)). Residues E788, E790, D809, and D811 each coordinate Mg(2+). A DNA-binding; may bind to the undamaged single-strand DNA of the DNA repair bubble region spans residues 819-835 (HVYKNFFNKNKFVEYYQ). Residues 847 to 879 (RNKLINLAYLLGSDYTEGIPTVGCVTAMEILNE) form a DNA-binding; H2TH (helix-2turn-helix) motif which binds double-stranded DNA region. D860 provides a ligand contact to Mg(2+). The interval 911-917 (TKVKKKL) is DNA-binding; may bind double-stranded DNA. Residues 980 to 1008 (LKHLNAHQTQLRIDSFFRLAQQEKQDAKL) are interaction with PCNA. Residues 1010–1170 (KSHRLNRAVT…KSMKRRKKKT (161 aa)) form an interaction with ERCC6/CSB region. Positions 1033 to 1146 (LTKVTEALDD…DDEDKAKTVL (114 aa)) are disordered. Over residues 1041 to 1060 (DDAKGKTQKRELPYKKETSV) the composition is skewed to basic and acidic residues. Residues 1049 to 1065 (KRELPYKKETSVPKRRR) carry the Nuclear localization signal 1 motif. Positions 1094 to 1110 (SVMSARQRSAAESSKIS) are enriched in polar residues. The Nuclear localization signal 2 signature appears at 1153 to 1170 (FGKKKLKLKSMKRRKKKT).

This sequence belongs to the XPG/RAD2 endonuclease family. XPG subfamily. In terms of assembly, monomer. Homodimer. Component of the homologous recombination repair (HR) complex composed of ERCC5/XPG, BRCA2, PALB2, DSS1 and RAD51. Within the complex, interacts with BRCA2 and PALB2. Interacts with RNA polymerase II. Interacts (via C-terminus) with ERCC6/CSB; the interaction stimulates ERCC6/CSB binding to the DNA repair bubble and ERCC6/CSB ATPase activity. May form a complex composed of RNA polymerase II, ERCC6/CSB and ERCC5/XPG which associates with the DNA repair bubble during transcription-coupled nucleotide excision repair. Interacts with BRCA1; the interaction promotes the release of BRCA1 from DNA. Interacts with PCNA. Interacts with NTHL1; the interaction stimulates NTHL1 activity and NTHL1 binding to its DNA substrate. Mg(2+) is required as a cofactor.

The protein localises to the nucleus. It localises to the chromosome. Single-stranded structure-specific DNA endonuclease involved in DNA excision repair. Makes the 3'incision in DNA nucleotide excision repair (NER). Binds and bends DNA repair bubble substrate and breaks base stacking at the single-strand/double-strand DNA junction of the DNA bubble. Plays a role in base excision repair (BER) by promoting the binding of DNA glycosylase NTHL1 to its substrate and increasing NTHL1 catalytic activity that removes oxidized pyrimidines from DNA. Involved in transcription-coupled nucleotide excision repair (TCR) which allows RNA polymerase II-blocking lesions to be rapidly removed from the transcribed strand of active genes. Functions during the initial step of TCR in cooperation with ERCC6/CSB to recognized stalled RNA polymerase II. Also, stimulates ERCC6/CSB binding to the DNA repair bubble and ERCC6/CSB ATPase activity. Required for DNA replication fork maintenance and preservation of genomic stability. Involved in homologous recombination repair (HRR) induced by DNA replication stress by recruiting RAD51, BRCA2, and PALB2 to the damaged DNA site. During HRR, binds to the replication fork with high specificity and stabilizes it. Also, acts upstream of HRR, to promote the release of BRCA1 from DNA. In Mus musculus (Mouse), this protein is DNA excision repair protein ERCC-5 (Ercc5).